The sequence spans 311 residues: HPr kinase/phosphorylase (311 aa).

Active-site residues include histidine 138 and lysine 159. Position 153–160 (153–160 (GSSGIGKS)) interacts with ATP. Serine 160 provides a ligand contact to Mg(2+). Residue aspartate 177 is the Proton acceptor; for phosphorylation activity. Proton donor; for dephosphorylation activity of the active site. The segment at 201-210 (LEIRGVGIIN) is important for the catalytic mechanism of both phosphorylation and dephosphorylation. Glutamate 202 provides a ligand contact to Mg(2+). Arginine 243 is an active-site residue. An important for the catalytic mechanism of dephosphorylation region spans residues 264-269 (PVRPGR).

It belongs to the HPrK/P family. As to quaternary structure, homohexamer. Mg(2+) serves as cofactor.

It catalyses the reaction [HPr protein]-L-serine + ATP = [HPr protein]-O-phospho-L-serine + ADP + H(+). The enzyme catalyses [HPr protein]-O-phospho-L-serine + phosphate + H(+) = [HPr protein]-L-serine + diphosphate. Its function is as follows. Catalyzes the ATP- as well as the pyrophosphate-dependent phosphorylation of a specific serine residue in HPr, a phosphocarrier protein of the phosphoenolpyruvate-dependent sugar phosphotransferase system (PTS). HprK/P also catalyzes the pyrophosphate-producing, inorganic phosphate-dependent dephosphorylation (phosphorolysis) of seryl-phosphorylated HPr (P-Ser-HPr). The two antagonistic activities of HprK/P are regulated by several intracellular metabolites, which change their concentration in response to the absence or presence of rapidly metabolisable carbon sources (glucose, fructose, etc.) in the growth medium. Therefore, by controlling the phosphorylation state of HPr, HPrK/P is a sensor enzyme that plays a major role in the regulation of carbon metabolism and sugar transport: it mediates carbon catabolite repression (CCR), and regulates PTS-catalyzed carbohydrate uptake and inducer exclusion. The polypeptide is HPr kinase/phosphorylase (Brevibacillus brevis (strain 47 / JCM 6285 / NBRC 100599)).